A 105-amino-acid polypeptide reads, in one-letter code: Phosphoribosyl-ATP pyrophosphatase (105 aa).

The protein belongs to the PRA-PH family.

It is found in the cytoplasm. The enzyme catalyses 1-(5-phospho-beta-D-ribosyl)-ATP + H2O = 1-(5-phospho-beta-D-ribosyl)-5'-AMP + diphosphate + H(+). It functions in the pathway amino-acid biosynthesis; L-histidine biosynthesis; L-histidine from 5-phospho-alpha-D-ribose 1-diphosphate: step 2/9. This Ruthia magnifica subsp. Calyptogena magnifica protein is Phosphoribosyl-ATP pyrophosphatase.